Consider the following 507-residue polypeptide: Alkyl hydroperoxide reductase subunit F (507 aa).

An FAD-binding site is contributed by 207-222 (DVLIVGGGPASGSAAI). A disulfide bridge links Cys335 with Cys338. An NAD(+)-binding site is contributed by 347–361 (DVAVIGGGNSGVEAA). 467–477 (TNVPGIFAAGD) serves as a coordination point for FAD.

It belongs to the class-II pyridine nucleotide-disulfide oxidoreductase family. In terms of assembly, homodimer. It depends on FAD as a cofactor.

Functionally, serves to protect the cell against DNA damage by alkyl hydroperoxides. It can use either NADH or NADPH as electron donor for direct reduction of redox dyes or of alkyl hydroperoxides when combined with the AhpC protein. The sequence is that of Alkyl hydroperoxide reductase subunit F (ahpF) from Staphylococcus epidermidis (strain ATCC 12228 / FDA PCI 1200).